The primary structure comprises 306 residues: Ribosomal RNA small subunit methyltransferase H (306 aa).

Residues 33–35 (GGY), Asp51, Phe82, Asp96, and Gln103 contribute to the S-adenosyl-L-methionine site.

This sequence belongs to the methyltransferase superfamily. RsmH family.

The protein localises to the cytoplasm. It carries out the reaction cytidine(1402) in 16S rRNA + S-adenosyl-L-methionine = N(4)-methylcytidine(1402) in 16S rRNA + S-adenosyl-L-homocysteine + H(+). Its function is as follows. Specifically methylates the N4 position of cytidine in position 1402 (C1402) of 16S rRNA. The protein is Ribosomal RNA small subunit methyltransferase H of Rickettsia akari (strain Hartford).